We begin with the raw amino-acid sequence, 554 residues long: 3-(3-hydroxy-phenyl)propionate/3-hydroxycinnamic acid hydroxylase (554 aa).

Residues 17–46 (QVAI…VVEK) and 285–295 (FRINRVLLAGD) contribute to the FAD site.

This sequence belongs to the PheA/TfdB FAD monooxygenase family. It depends on FAD as a cofactor.

It catalyses the reaction 3-(3-hydroxyphenyl)propanoate + NADH + O2 + H(+) = 3-(2,3-dihydroxyphenyl)propanoate + NAD(+) + H2O. The enzyme catalyses (2E)-3-(3-hydroxyphenyl)prop-2-enoate + NADH + O2 + H(+) = (2E)-3-(2,3-dihydroxyphenyl)prop-2-enoate + NAD(+) + H2O. The protein operates within aromatic compound metabolism; 3-phenylpropanoate degradation. Catalyzes the insertion of one atom of molecular oxygen into position 2 of the phenyl ring of 3-(3-hydroxyphenyl)propionate (3-HPP) and hydroxycinnamic acid (3HCI). The sequence is that of 3-(3-hydroxy-phenyl)propionate/3-hydroxycinnamic acid hydroxylase from Klebsiella pneumoniae subsp. pneumoniae (strain ATCC 700721 / MGH 78578).